Consider the following 597-residue polypeptide: Elongation factor 4 (597 aa).

Positions 2 to 184 constitute a tr-type G domain; that stretch reads KHIRNFSIIA…EIVARIPAPV (183 aa). GTP is bound by residues 14–19 and 131–134; these read DHGKST and NKID.

It belongs to the TRAFAC class translation factor GTPase superfamily. Classic translation factor GTPase family. LepA subfamily.

The protein resides in the cell inner membrane. It catalyses the reaction GTP + H2O = GDP + phosphate + H(+). Its function is as follows. Required for accurate and efficient protein synthesis under certain stress conditions. May act as a fidelity factor of the translation reaction, by catalyzing a one-codon backward translocation of tRNAs on improperly translocated ribosomes. Back-translocation proceeds from a post-translocation (POST) complex to a pre-translocation (PRE) complex, thus giving elongation factor G a second chance to translocate the tRNAs correctly. Binds to ribosomes in a GTP-dependent manner. This Aeromonas salmonicida (strain A449) protein is Elongation factor 4.